The chain runs to 424 residues: Anaerobic glycerol-3-phosphate dehydrogenase subunit B (424 aa).

It belongs to the anaerobic G-3-P dehydrogenase subunit B family. As to quaternary structure, composed of a catalytic GlpA/B dimer and of membrane bound GlpC. Requires FMN as cofactor.

The catalysed reaction is a quinone + sn-glycerol 3-phosphate = dihydroxyacetone phosphate + a quinol. The protein operates within polyol metabolism; glycerol degradation via glycerol kinase pathway; glycerone phosphate from sn-glycerol 3-phosphate (anaerobic route): step 1/1. Its function is as follows. Conversion of glycerol 3-phosphate to dihydroxyacetone. Uses fumarate or nitrate as electron acceptor. This chain is Anaerobic glycerol-3-phosphate dehydrogenase subunit B, found in Yersinia pestis bv. Antiqua (strain Antiqua).